Here is a 181-residue protein sequence, read N- to C-terminus: Oligoribonuclease (181 aa).

The 164-residue stretch at 8 to 171 (LVWLDMEMTG…ADIYESIDEL (164 aa)) folds into the Exonuclease domain. Residue Tyr-129 is part of the active site.

This sequence belongs to the oligoribonuclease family.

The protein resides in the cytoplasm. Its function is as follows. 3'-to-5' exoribonuclease specific for small oligoribonucleotides. This chain is Oligoribonuclease, found in Bordetella bronchiseptica (strain ATCC BAA-588 / NCTC 13252 / RB50) (Alcaligenes bronchisepticus).